The sequence spans 280 residues: Protein lyl-1 (280 aa).

The tract at residues Met1–Val60 is disordered. A compositionally biased stretch (pro residues) spans Ser25–Pro40. The region spanning Ala150–Leu202 is the bHLH domain. A disordered region spans residues Ala214–Arg280. The span at Arg229–Ala245 shows a compositional bias: basic and acidic residues. The segment covering Pro257 to Pro267 has biased composition (low complexity). 2 positions are modified to phosphoserine: Ser260 and Ser276.

As to quaternary structure, efficient DNA binding requires dimerization with another bHLH protein.

The protein resides in the nucleus. This chain is Protein lyl-1 (LYL1), found in Homo sapiens (Human).